The chain runs to 361 residues: Methylthioribose-1-phosphate isomerase (361 aa).

Asp-245 serves as the catalytic Proton donor.

It belongs to the eIF-2B alpha/beta/delta subunits family. MtnA subfamily.

It is found in the cytoplasm. The protein resides in the nucleus. The enzyme catalyses 5-(methylsulfanyl)-alpha-D-ribose 1-phosphate = 5-(methylsulfanyl)-D-ribulose 1-phosphate. Its pathway is amino-acid biosynthesis; L-methionine biosynthesis via salvage pathway; L-methionine from S-methyl-5-thio-alpha-D-ribose 1-phosphate: step 1/6. In terms of biological role, catalyzes the interconversion of methylthioribose-1-phosphate (MTR-1-P) into methylthioribulose-1-phosphate (MTRu-1-P). The chain is Methylthioribose-1-phosphate isomerase from Monosiga brevicollis (Choanoflagellate).